The following is a 195-amino-acid chain: Inhibitor of glycogen debranching 1 (195 aa).

Residues 1 to 18 (MTDPHLNTPQVSTSPTFE) are compositionally biased toward polar residues. Residues 1-101 (MTDPHLNTPQ…ERRSSGPMDF (101 aa)) are disordered. Phosphoserine is present on Ser64. Residue Thr65 is modified to Phosphothreonine. Basic and acidic residues predominate over residues 75–95 (EQARERESSIGEHAPGAERRS). A phosphoserine mark is found at Ser95 and Ser96. Residue Thr132 is modified to Phosphothreonine. Residues 146-175 (NSYLDNNSNGNSARVPHGSPPQLGTRRKSS) form a disordered region. Residues 148-157 (YLDNNSNGNS) are compositionally biased toward polar residues. Ser164 bears the Phosphoserine mark.

In terms of assembly, interacts with GDB1.

It is found in the cytoplasm. Functionally, acts as an inhibitor of GDB1, enhancing the ability of cells to store glucose as glycogen. In Saccharomyces cerevisiae (strain ATCC 204508 / S288c) (Baker's yeast), this protein is Inhibitor of glycogen debranching 1 (IGD1).